The following is a 335-amino-acid chain: Phosphatidylinositol:ceramide inositolphosphotransferase (335 aa).

The Cytoplasmic portion of the chain corresponds to 1 to 21 (MVLMGPHSALRLLPLKTQAIR). A helical transmembrane segment spans residues 22–42 (FVLLLLLSVLILAVALLVTNA). The Extracellular portion of the chain corresponds to 43–72 (RMPDPKVVRPLPDIGFEVFPKVGWLEHLTD). Residues 73-93 (VCIFILNFLSLLVVFKLYLLH) traverse the membrane as a helical segment. Residues 94-98 (RQNEG) lie on the Cytoplasmic side of the membrane. Residues 99-119 (LDELQPFSCCPLIGKIIFGVW) form a helical membrane-spanning segment. The Extracellular portion of the chain corresponds to 120–139 (DSGRQSGIEKRDAHLIAWIR). The helical transmembrane segment at 140-160 (YFTTYFIVLLFRAIVVVMTSY) threads the bilayer. Over 161-179 (PATDNHCQNPMKITNPVKN) the chain is Cytoplasmic. Residues 180-200 (VIMTLVTFGSGSIHCGDLMFS) traverse the membrane as a helical segment. Residues 201–203 (GHT) are Extracellular-facing. Histidine 202 is an active-site residue. A helical transmembrane segment spans residues 204-224 (VSITLSLLVQWIYGSMLHWVF). Residues 225 to 335 (RPASVLLVLL…GPACGNFGHW (111 aa)) lie on the Cytoplasmic side of the membrane. Catalysis depends on residues histidine 245 and aspartate 249.

Belongs to the sphingomyelin synthase family.

The protein resides in the membrane. Its function is as follows. Bidirectional lipid inositolphosphotransferase capable of converting phosphatidylinositol (PI) and ceramide to inositol-phosphorylceramide (IPC) and diacylglycerol (DAG) and vice versa. Direction is dependent on the relative concentrations of DAG and ceramide as phosphoinositol acceptors. Essential for viability of the pathogenic bloodstream stage of this human protozoan parasite and, consequently, can be considered as potential drug target. The protein is Phosphatidylinositol:ceramide inositolphosphotransferase of Trypanosoma cruzi (strain CL Brener).